A 242-amino-acid polypeptide reads, in one-letter code: MRPSERAPDVLRVVTLETGVNRYAEGSCLISFGHTKVLVTATVEENVPGWMRNKGAGWVTAEYGMLPRATHTRGRREAALGKQSGRTQEIQRLIGRSLRAVVDLKALGERQISLDCDVLQADGGTRTAAITGAWVALRIAVNYLLEEGVLKTDPIVGQVAAVSCGVFKDTPVLDLDYEEDSQAEADSNFVLTNVGDIVEIQATGEKRGFTRGEFEQLFALAEKGIGELFVKQLEAVSAAKPR.

Phosphate-binding positions include arginine 86 and 124–126 (GTR).

The protein belongs to the RNase PH family. Homohexameric ring arranged as a trimer of dimers.

The catalysed reaction is tRNA(n+1) + phosphate = tRNA(n) + a ribonucleoside 5'-diphosphate. Functionally, phosphorolytic 3'-5' exoribonuclease that plays an important role in tRNA 3'-end maturation. Removes nucleotide residues following the 3'-CCA terminus of tRNAs; can also add nucleotides to the ends of RNA molecules by using nucleoside diphosphates as substrates, but this may not be physiologically important. Probably plays a role in initiation of 16S rRNA degradation (leading to ribosome degradation) during starvation. The chain is Ribonuclease PH from Caulobacter sp. (strain K31).